A 156-amino-acid polypeptide reads, in one-letter code: MMSQTLTLCCLALVACVYGNTVSTNDTACPTFCPSIYKPVCGTDGQNFKEFASTCNLLSHNCRRERNSVQAYAATDAAWCSSEFVENLHEKLGNFKLEVKECFKPCSMIYQPVCITNGKYRAELANSCLLENFNCALQVSGAQPAELFRLLREEKC.

Positions 1–19 (MMSQTLTLCCLALVACVYG) are cleaved as a signal peptide. 2 Kazal-like domains span residues 23-81 (STND…AWCS) and 96-156 (KLEV…EEKC). 5 cysteine pairs are disulfide-bonded: cysteine 29-cysteine 62, cysteine 33-cysteine 55, cysteine 102-cysteine 135, cysteine 106-cysteine 128, and cysteine 114-cysteine 156.

The sequence is that of Enhancer of split M1 protein (Kaz-m1) from Drosophila melanogaster (Fruit fly).